A 264-amino-acid polypeptide reads, in one-letter code: uncharacterized protein (264 aa).

The tract at residues 1–20 (MENIEKKCQPETINEDNNDE) is disordered.

Belongs to the mimivirus R73/L269/L862 family.

This is an uncharacterized protein from Acanthamoeba polyphaga mimivirus (APMV).